The chain runs to 362 residues: Chorismate synthase (362 aa).

Positions 48 and 54 each coordinate NADP(+). FMN is bound by residues 131–133 (RSS), 243–244 (NA), Gly-287, 302–306 (KPTSS), and Arg-328.

The protein belongs to the chorismate synthase family. Homotetramer. FMNH2 serves as cofactor.

The catalysed reaction is 5-O-(1-carboxyvinyl)-3-phosphoshikimate = chorismate + phosphate. Its pathway is metabolic intermediate biosynthesis; chorismate biosynthesis; chorismate from D-erythrose 4-phosphate and phosphoenolpyruvate: step 7/7. Catalyzes the anti-1,4-elimination of the C-3 phosphate and the C-6 proR hydrogen from 5-enolpyruvylshikimate-3-phosphate (EPSP) to yield chorismate, which is the branch point compound that serves as the starting substrate for the three terminal pathways of aromatic amino acid biosynthesis. This reaction introduces a second double bond into the aromatic ring system. The polypeptide is Chorismate synthase (Rhodopseudomonas palustris (strain ATCC BAA-98 / CGA009)).